Consider the following 253-residue polypeptide: Ethylene-responsive transcription factor RAP2-11 (253 aa).

Positions 21 to 78 form a DNA-binding region, AP2/ERF; the sequence is KFVGVRQRPSGKWVAEIKDTTQKIRMWLGTFETAEEAARAYDEAACLLRGSNTRTNFA.

It belongs to the AP2/ERF transcription factor family. ERF subfamily.

Its subcellular location is the nucleus. In terms of biological role, probably acts as a transcriptional activator. Binds to the GCC-box pathogenesis-related promoter element. May be involved in the regulation of gene expression by stress factors and by components of stress signal transduction pathways. This is Ethylene-responsive transcription factor RAP2-11 (RAP2-11) from Arabidopsis thaliana (Mouse-ear cress).